Reading from the N-terminus, the 144-residue chain is Glutamyl-tRNA(Gln) amidotransferase subunit C, mitochondrial (144 aa).

Residues 1 to 17 (MFRRSVSFVRSHVLRSF) constitute a mitochondrion transit peptide.

It belongs to the GatC family. As to quaternary structure, subunit of the heterotrimeric GatCAB amidotransferase (AdT) complex, composed of A, B and C subunits.

It is found in the mitochondrion. The catalysed reaction is L-glutamyl-tRNA(Gln) + L-glutamine + ATP + H2O = L-glutaminyl-tRNA(Gln) + L-glutamate + ADP + phosphate + H(+). Allows the formation of correctly charged Gln-tRNA(Gln) through the transamidation of misacylated Glu-tRNA(Gln) in the mitochondria. The reaction takes place in the presence of glutamine and ATP through an activated gamma-phospho-Glu-tRNA(Gln). The polypeptide is Glutamyl-tRNA(Gln) amidotransferase subunit C, mitochondrial (Ixodes scapularis (Black-legged tick)).